The primary structure comprises 432 residues: Interleukin-11 receptor subunit alpha-1 (432 aa).

A signal peptide spans 1-23 (MSSSCSGLTRVLVAVATALVSSS). Topologically, residues 24–372 (SPCPQAWGPP…DPLEQVAVLA (349 aa)) are extracellular. Residues 27-110 (PQAWGPPGVQ…SGGMVTLKLG (84 aa)) form the Ig-like C2-type domain. 3 cysteine pairs are disulfide-bonded: Cys48/Cys94, Cys120/Cys130, and Cys170/Cys180. Fibronectin type-III domains follow at residues 112–219 (PPAR…LRPD) and 220–317 (PPQG…TPST). Asn127 carries N-linked (GlcNAc...) asparagine glycosylation. The interval 151-170 (KTLPGAESQRESPSTGPWPC) is disordered. An N-linked (GlcNAc...) asparagine glycan is attached at Asn194. A WSXWS motif motif is present at residues 304–308 (WSAWS). Disordered stretches follow at residues 309–332 (PEAW…QGHG) and 342–361 (EDSP…PLDH). The chain crosses the membrane as a helical span at residues 373-393 (SLGIFSCLGLAVGALALGLWL). Topologically, residues 394–432 (RLRRSGKDGPQKPGLLAPMIPVEKLPGIPNLQRTPENFS) are cytoplasmic.

This sequence belongs to the type I cytokine receptor family. Type 3 subfamily. In terms of assembly, on IL11 binding, forms a multimer complex with IL6ST/gp130. A short soluble form is also released from the membrane by proteolysis. The sIL11RA is formed either by limited proteolysis of membrane-bound receptors, a process referred to as ectodomain shedding, or directly secreted from the cells after alternative mRNA splicing. mIL11RA is cleaved by the proteases ADAM10, ELANE and PRTN3. Widely expressed in all adult tissues and in embryos. Highest levels in kidney, skeletal muscle and embryo.

Its subcellular location is the membrane. It localises to the secreted. Receptor for interleukin-11. The receptor systems for IL6, LIF, OSM, CNTF, IL11 and CT1 can utilize IL6ST for initiating signal transmission. The IL11/IL11RA/IL6ST complex may be involved in the control of proliferation and/or differentiation of skeletogenic progenitor or other mesenchymal cells. Essential for the normal development of craniofacial bones and teeth. In terms of biological role, soluble form of IL11 receptor (sIL11RA) that acts as an agonist of IL11 activity. The IL11:sIL11RA complex binds to IL6ST/gp130 on cell surfaces and induces signaling also on cells that do not express membrane-bound IL11RA in a process called IL11 trans-signaling. The sequence is that of Interleukin-11 receptor subunit alpha-1 from Mus musculus (Mouse).